Consider the following 542-residue polypeptide: Chromatin structure-remodeling complex subunit rsc4 (542 aa).

The Bromo 1 domain occupies 6-116; that stretch reads HNAPFDKTKF…NTANSLESKD (111 aa). Disordered regions lie at residues 114 to 139 and 246 to 327; these read SKDGTLNEEENEEMESSINEEHKPGT and ISSF…PIPE. Residues 119 to 128 show a composition bias toward acidic residues; the sequence is LNEEENEEME. In terms of domain architecture, Bromo 2 spans 139-249; sequence TNEIDVPKVI…QLSSSLISSF (111 aa). The span at 252–266 shows a compositional bias: basic and acidic residues; sequence QPKEHSPATSKHEPE. 4 positions are modified to phosphoserine: serine 257, serine 271, serine 287, and serine 313. A compositionally biased stretch (low complexity) spans 268–280; that stretch reads TPASPTPSVSAST. Over residues 286–298 the composition is skewed to polar residues; sequence TSVAPSFITSDQA. The segment covering 304 to 322 has biased composition (basic and acidic residues); the sequence is LKSEEAHVESFSKESEKDQ.

In terms of assembly, component of the RSC complex composed of at least arp9, arp42, rsc1, rsc4, rsc7, rsc9, rsc58, sfh1, snf21, ssr1, ssr2, ssr3 and ssr4. The complex interacts with histone and histone variant components of centromeric chromatin.

It localises to the nucleus. Functionally, component of the chromatin structure remodeling complex (RSC), which is involved in transcription regulation and nucleosome positioning. Controls particularly membrane and organelle development genes. The protein is Chromatin structure-remodeling complex subunit rsc4 (rsc4) of Schizosaccharomyces pombe (strain 972 / ATCC 24843) (Fission yeast).